The chain runs to 382 residues: MSDVIKNFFKLESAGGILLVIAAAIAMIIANSSFAPMYDTFLHTYLGGMSVSHWINDGLMAVFFLLIGLEVKRELLEGALKSKETAIFPAIAAVGGMLAPALVYVAFNMGDPEALSGWAIPAATDIAFALGIMALLGNRVPVSLKVFLLALAIIDDLGVVVIIAFFYTSDLSVLALVIGFVMTGILFLLNSKHVSKIRWYLLVGFILWVSVLQSGVHATLAGVVLGFAIPLKGKKGERSPLKHMEHALHPYVAFGILPLFAFANAGISLDGVSLDSLTTTLPLGVALGLFLGKPLGIFSFSYVAVKSGIAKLPAGVNMKHIFAVSVLCGIGFTMSIFISSLAFGGANPEFDKLARLGILMGSTLAAVVGYILLHISLPKKAA.

Transmembrane regions (helical) follow at residues 14–34 (AGGILLVIAAAIAMIIANSSF), 49–69 (MSVSHWINDGLMAVFFLLIGL), 87–107 (IFPAIAAVGGMLAPALVYVAF), 117–137 (GWAIPAATDIAFALGIMALLG), 146–166 (VFLLALAIIDDLGVVVIIAFF), 171–191 (LSVLALVIGFVMTGILFLLNS), 205–225 (FILWVSVLQSGVHATLAGVVL), 247–267 (ALHPYVAFGILPLFAFANAGI), 285–305 (VALGLFLGKPLGIFSFSYVAV), 321–341 (IFAVSVLCGIGFTMSIFISSL), and 356–376 (LGILMGSTLAAVVGYILLHIS).

The protein belongs to the NhaA Na(+)/H(+) (TC 2.A.33) antiporter family.

The protein resides in the cell inner membrane. It carries out the reaction Na(+)(in) + 2 H(+)(out) = Na(+)(out) + 2 H(+)(in). In terms of biological role, na(+)/H(+) antiporter that extrudes sodium in exchange for external protons. In Aliivibrio salmonicida (strain LFI1238) (Vibrio salmonicida (strain LFI1238)), this protein is Na(+)/H(+) antiporter NhaA.